Here is a 241-residue protein sequence, read N- to C-terminus: Eukaryotic translation initiation factor 3 subunit J (241 aa).

Residues 1 to 94 (MDVSWDADNF…EKTAEEMTPE (94 aa)) form a disordered region. The segment covering 26-45 (GEDEDDNVKESWEDEEEEKK) has biased composition (acidic residues). Residues 61 to 118 (KKKIHDKIAERERQEREKAERLVTEKTAEEMTPEQKLAEKLRQQKLQEESDLRLAMET) adopt a coiled-coil conformation. Basic and acidic residues predominate over residues 66–89 (DKIAERERQEREKAERLVTEKTAE).

This sequence belongs to the eIF-3 subunit J family. Component of the eukaryotic translation initiation factor 3 (eIF-3) complex.

It is found in the cytoplasm. Component of the eukaryotic translation initiation factor 3 (eIF-3) complex, which is involved in protein synthesis of a specialized repertoire of mRNAs and, together with other initiation factors, stimulates binding of mRNA and methionyl-tRNAi to the 40S ribosome. The eIF-3 complex specifically targets and initiates translation of a subset of mRNAs involved in cell proliferation. In Bombyx mori (Silk moth), this protein is Eukaryotic translation initiation factor 3 subunit J.